A 123-amino-acid polypeptide reads, in one-letter code: MPTINQLIASPRVLQKSRKKVPALQQSPQKRGVCTRVYTTTPKKPNSALRKVAKVRLTNGFEVIGYIPGEGHNLQEHSVVMIRGGRVKDLPGVRYHILRGVLDTQGVKNRKQRRSKYGAKRPK.

D89 is modified (3-methylthioaspartic acid).

Belongs to the universal ribosomal protein uS12 family. As to quaternary structure, part of the 30S ribosomal subunit. Contacts proteins S8 and S17. May interact with IF1 in the 30S initiation complex.

In terms of biological role, with S4 and S5 plays an important role in translational accuracy. Its function is as follows. Interacts with and stabilizes bases of the 16S rRNA that are involved in tRNA selection in the A site and with the mRNA backbone. Located at the interface of the 30S and 50S subunits, it traverses the body of the 30S subunit contacting proteins on the other side and probably holding the rRNA structure together. The combined cluster of proteins S8, S12 and S17 appears to hold together the shoulder and platform of the 30S subunit. In Nitrobacter winogradskyi (strain ATCC 25391 / DSM 10237 / CIP 104748 / NCIMB 11846 / Nb-255), this protein is Small ribosomal subunit protein uS12.